A 51-amino-acid polypeptide reads, in one-letter code: Defensin-like protein 1 (51 aa).

Q1 bears the Pyrrolidone carboxylic acid mark. 4 disulfide bridges follow: C4–C51, C15–C36, C21–C45, and C25–C47.

In terms of assembly, forms oligomers in its native state.

In terms of biological role, possesses antifungal activity sensitive to inorganic cations. This chain is Defensin-like protein 1, found in Sinapis alba (White mustard).